A 209-amino-acid chain; its full sequence is ATP synthase subunit b', chloroplastic (209 aa).

The N-terminal 62 residues, 1 to 62 (MASLLARPQQ…NALMAMPAAA (62 aa)), are a transit peptide targeting the chloroplast. Residues 67–87 (IFDFNLTLPVMAGEFLLLMVF) traverse the membrane as a helical segment.

The protein belongs to the ATPase B chain family. F-type ATPases have 2 components, F(1) - the catalytic core - and F(0) - the membrane proton channel. F(1) has five subunits: alpha(3), beta(3), gamma(1), delta(1), epsilon(1). F(0) has four main subunits: a(1), b(1), b'(1) and c(10-14). The alpha and beta chains form an alternating ring which encloses part of the gamma chain. F(1) is attached to F(0) by a central stalk formed by the gamma and epsilon chains, while a peripheral stalk is formed by the delta, b and b' chains.

The protein localises to the plastid. It localises to the chloroplast thylakoid membrane. Its function is as follows. F(1)F(0) ATP synthase produces ATP from ADP in the presence of a proton or sodium gradient. F-type ATPases consist of two structural domains, F(1) containing the extramembraneous catalytic core and F(0) containing the membrane proton channel, linked together by a central stalk and a peripheral stalk. During catalysis, ATP synthesis in the catalytic domain of F(1) is coupled via a rotary mechanism of the central stalk subunits to proton translocation. In terms of biological role, component of the F(0) channel, it forms part of the peripheral stalk, linking F(1) to F(0). The b'-subunit is a diverged and duplicated form of b found in plants and photosynthetic bacteria. In Chlamydomonas reinhardtii (Chlamydomonas smithii), this protein is ATP synthase subunit b', chloroplastic.